The sequence spans 245 residues: Cysteine-rich secretory protein 3 (245 aa).

Positions 1–20 (MTLFPVLLFLVAGLLPSFPA) are cleaved as a signal peptide. The SCP domain occupies 43–171 (VNKHNELRRA…VLKYYYVCQY (129 aa)). Cystine bridges form between cysteine 191-cysteine 198, cysteine 194-cysteine 203, cysteine 207-cysteine 240, cysteine 216-cysteine 234, and cysteine 225-cysteine 238. The ShKT domain maps to 207-240 (CKYEDLYSNCKSLKLTLTCKHQLVRDSCKASCNC). The N-linked (GlcNAc...) asparagine glycan is linked to asparagine 239.

This sequence belongs to the CRISP family. As to quaternary structure, interacts with A1BG. Salivary gland, pancreas and prostate &gt; epididymis, ovary, thymus and colon.

It is found in the secreted. This Homo sapiens (Human) protein is Cysteine-rich secretory protein 3 (CRISP3).